We begin with the raw amino-acid sequence, 922 residues long: Isoleucine--tRNA ligase (922 aa).

A 'HIGH' region motif is present at residues 57–67; the sequence is PYANGDIHLGH. Glu-553 is a binding site for L-isoleucyl-5'-AMP. The 'KMSKS' region signature appears at 594–598; that stretch reads KMSKS. Lys-597 serves as a coordination point for ATP. 4 residues coordinate Zn(2+): Cys-892, Cys-895, Cys-912, and Cys-915.

Belongs to the class-I aminoacyl-tRNA synthetase family. IleS type 1 subfamily. As to quaternary structure, monomer. The cofactor is Zn(2+).

Its subcellular location is the cytoplasm. It catalyses the reaction tRNA(Ile) + L-isoleucine + ATP = L-isoleucyl-tRNA(Ile) + AMP + diphosphate. In terms of biological role, catalyzes the attachment of isoleucine to tRNA(Ile). As IleRS can inadvertently accommodate and process structurally similar amino acids such as valine, to avoid such errors it has two additional distinct tRNA(Ile)-dependent editing activities. One activity is designated as 'pretransfer' editing and involves the hydrolysis of activated Val-AMP. The other activity is designated 'posttransfer' editing and involves deacylation of mischarged Val-tRNA(Ile). This chain is Isoleucine--tRNA ligase, found in Desulfitobacterium hafniense (strain DSM 10664 / DCB-2).